The following is a 191-amino-acid chain: Imidazoleglycerol-phosphate dehydratase (191 aa).

The protein belongs to the imidazoleglycerol-phosphate dehydratase family.

Its subcellular location is the cytoplasm. The catalysed reaction is D-erythro-1-(imidazol-4-yl)glycerol 3-phosphate = 3-(imidazol-4-yl)-2-oxopropyl phosphate + H2O. The protein operates within amino-acid biosynthesis; L-histidine biosynthesis; L-histidine from 5-phospho-alpha-D-ribose 1-diphosphate: step 6/9. The protein is Imidazoleglycerol-phosphate dehydratase of Methanosarcina barkeri (strain Fusaro / DSM 804).